Reading from the N-terminus, the 478-residue chain is PRAME family member 15 (478 aa).

The stretch at 99 to 126 (RWKLQVLDLQDVCENFWMVWSEAMAHGC) is one LRR 1; degenerate repeat. The stretch at 181–205 (HLCCKKLKILGMPFRNIRSILKMVN) is one LRR 2; degenerate repeat. An LRR 3; degenerate repeat occupies 206–232 (LDCIQEVEVNCKWVLPILTQFTPYLGH). An LRR 4; degenerate repeat occupies 233–268 (MRNLQKLVLSHMDVSRYVSPEQKKEIVTQFTTQFLK). 5 LRR repeats span residues 269-294 (LRCLQKLYMNSVSFLEGHLDQLLSCL), 295-326 (KTSLKVLTITNCVLLESDLKHLSQCPSISQLK), 327-347 (TLDLSGIRLTNYSLVPLQILL), 351-378 (AATLEYLDLDDCGIIDSQVNAILPALSR), and 379-403 (CFELNTFSFCGNPICMATLENLLSH).

It belongs to the PRAME family.

This is PRAME family member 15 from Homo sapiens (Human).